We begin with the raw amino-acid sequence, 277 residues long: Protein OPG166 (277 aa).

Asparagine 29 and asparagine 58 each carry an N-linked (GlcNAc...) asparagine; by host glycan. The next 5 helical transmembrane spans lie at 124–144 (TMLM…EIAY), 156–176 (GILQ…AFLF), 186–206 (IIGL…KVFS), 219–239 (LIIY…GLSL), and 247–267 (LLLS…LFLV).

The protein belongs to the orthopoxvirus OPG166 protein family.

It is found in the host membrane. Its function is as follows. Promotes, when overexpressed, the influx of extracellular Ca(2+), leading to membrane permeability and host cell necrosis. The polypeptide is Protein OPG166 (OPG166) (Variola virus (isolate Human/India/Ind3/1967) (VARV)).